The primary structure comprises 690 residues: Guanylate cyclase soluble subunit alpha-1 (690 aa).

S267 bears the Phosphoserine mark. The Guanylate cyclase domain occupies 481–608; the sequence is TMLFSDIVGF…NNVTLANKFE (128 aa).

It belongs to the adenylyl cyclase class-4/guanylyl cyclase family. As to quaternary structure, the active enzyme is formed by a heterodimer of an alpha and a beta subunit. Heterodimer with GUCY1B1. Mg(2+) serves as cofactor. It depends on Mn(2+) as a cofactor.

The protein resides in the cytoplasm. The enzyme catalyses GTP = 3',5'-cyclic GMP + diphosphate. With respect to regulation, activated by nitric oxide in the presence of magnesium or manganese ions. This chain is Guanylate cyclase soluble subunit alpha-1 (GUCY1A1), found in Canis lupus familiaris (Dog).